Consider the following 70-residue polypeptide: Beta-defensin 43 (70 aa).

The first 22 residues, 1-22, serve as a signal peptide directing secretion; that stretch reads MRLLLSILGVLTLLSILPLARS. 2 disulfides stabilise this stretch: C29/C57 and C36/C50.

This sequence belongs to the beta-defensin family.

It localises to the secreted. Functionally, has bactericidal activity. This chain is Beta-defensin 43 (Defb43), found in Rattus norvegicus (Rat).